A 173-amino-acid chain; its full sequence is Translation initiation factor IF-3 (173 aa).

The protein belongs to the IF-3 family. As to quaternary structure, monomer.

Its subcellular location is the cytoplasm. Functionally, IF-3 binds to the 30S ribosomal subunit and shifts the equilibrium between 70S ribosomes and their 50S and 30S subunits in favor of the free subunits, thus enhancing the availability of 30S subunits on which protein synthesis initiation begins. The polypeptide is Translation initiation factor IF-3 (Lactiplantibacillus plantarum (strain ATCC BAA-793 / NCIMB 8826 / WCFS1) (Lactobacillus plantarum)).